A 914-amino-acid polypeptide reads, in one-letter code: TRPM8 channel-associated factor 2 (914 aa).

One can recognise a Peptidase M60 domain in the interval 541–840; it reads DAWMSTGLNL…TYLQLQEAFG (300 aa).

It belongs to the TCAF family. In terms of assembly, interacts with TRPM8 (via N-terminus and C-terminus domains); the interaction inhibits TRPM8 channel activity. Interacts with TRPV6.

It localises to the cell membrane. Negatively regulates the plasma membrane cation channel TRPM8 activity. Involved in the recruitment of TRPM8 to the cell surface. Promotes prostate cancer cell migration stimulation in a TRPM8-dependent manner. The polypeptide is TRPM8 channel-associated factor 2 (Bos taurus (Bovine)).